The following is a 65-amino-acid chain: Large ribosomal subunit protein bL31 (65 aa).

Zn(2+) contacts are provided by Cys16, Cys18, Cys36, and Cys39.

Belongs to the bacterial ribosomal protein bL31 family. Type A subfamily. Part of the 50S ribosomal subunit. Zn(2+) is required as a cofactor.

Functionally, binds the 23S rRNA. This chain is Large ribosomal subunit protein bL31, found in Campylobacter jejuni subsp. doylei (strain ATCC BAA-1458 / RM4099 / 269.97).